The following is a 124-amino-acid chain: Ribonuclease pancreatic (124 aa).

Residues 1–24 (KESSAMKFQRQHMDSSGSPSTNAN) are disordered. Lysine 7 and arginine 10 together coordinate substrate. The active-site Proton acceptor is histidine 12. Positions 14–24 (DSSGSPSTNAN) are enriched in polar residues. Disulfide bonds link cysteine 26–cysteine 84, cysteine 40–cysteine 95, cysteine 58–cysteine 110, and cysteine 65–cysteine 72. A glycan (N-linked (GlcNAc...) asparagine) is linked at asparagine 34. Residues 41-45 (KPVNT), lysine 66, and arginine 85 contribute to the substrate site. Histidine 119 functions as the Proton donor in the catalytic mechanism.

Belongs to the pancreatic ribonuclease family. Monomer. Interacts with and forms tight 1:1 complexes with RNH1. Dimerization of two such complexes may occur. Interaction with RNH1 inhibits this protein. As to expression, pancreas.

Its subcellular location is the secreted. It carries out the reaction an [RNA] containing cytidine + H2O = an [RNA]-3'-cytidine-3'-phosphate + a 5'-hydroxy-ribonucleotide-3'-[RNA].. The enzyme catalyses an [RNA] containing uridine + H2O = an [RNA]-3'-uridine-3'-phosphate + a 5'-hydroxy-ribonucleotide-3'-[RNA].. Endonuclease that catalyzes the cleavage of RNA on the 3' side of pyrimidine nucleotides. Acts on single-stranded and double-stranded RNA. This Chinchilla chinchilla (Short-tailed chinchilla) protein is Ribonuclease pancreatic (RNASE1).